Reading from the N-terminus, the 207-residue chain is N-(5'-phosphoribosyl)anthranilate isomerase (207 aa).

The protein belongs to the TrpF family.

The enzyme catalyses N-(5-phospho-beta-D-ribosyl)anthranilate = 1-(2-carboxyphenylamino)-1-deoxy-D-ribulose 5-phosphate. Its pathway is amino-acid biosynthesis; L-tryptophan biosynthesis; L-tryptophan from chorismate: step 3/5. This Legionella pneumophila (strain Corby) protein is N-(5'-phosphoribosyl)anthranilate isomerase.